Here is a 277-residue protein sequence, read N- to C-terminus: (-)-trans-carveol dehydrogenase (277 aa).

NAD(+) is bound at residue 10–32 (LITGAARGQGRSHAIKLAEEGAD). Position 156 (Ser-156) interacts with substrate. The active-site Proton acceptor is the Tyr-169.

This sequence belongs to the short-chain dehydrogenases/reductases (SDR) family. As to quaternary structure, homotetramer.

It catalyses the reaction (1S,5R)-carveol + NAD(+) = (R)-carvone + NADH + H(+). The catalysed reaction is (1S,5S)-carveol + NAD(+) = (S)-carvone + NADH + H(+). Its pathway is terpene metabolism; limonene degradation. With respect to regulation, competitively inhibited by the product (S)- or (R)-carvone. In terms of biological role, catalyzes the oxidation of carveol to carvone, with a strong stereoselectivity since it efficiently converts only the (6S)-stereoisomers, of which (-)-(4R,6S)-trans-carveol is the better substrate. Displays a broad substrate specificity with a preference for substituted cyclohexanols, and does not catalyze the oxidation of primary or short chain aliphatic secondary alcohols. Is also able, albeit more slowly, to oxidize limonene-1,2-diol into 1-hydroxy-2-oxolimonene. This chain is (-)-trans-carveol dehydrogenase (limC), found in Rhodococcus erythropolis (Arthrobacter picolinophilus).